A 245-amino-acid chain; its full sequence is Ribosomal RNA small subunit methyltransferase G (245 aa).

Residues G90, L95, 140–141 (AE), and R158 contribute to the S-adenosyl-L-methionine site.

The protein belongs to the methyltransferase superfamily. RNA methyltransferase RsmG family.

Its subcellular location is the cytoplasm. Functionally, specifically methylates the N7 position of guanine in position 518 of 16S rRNA. The chain is Ribosomal RNA small subunit methyltransferase G from Mycobacterium leprae (strain TN).